Consider the following 142-residue polypeptide: MKTFVAKPETVKRDWYVVDATGKTLGRLATELARRLRGKHKAEYTPHVDTGDYIIVINADKVAVTGRKETDKVYYWHTGYVGGIKQATFKEMIARRPEAVIEIAVKGMLPKGPLGRAMFRKLKVYAGAQHEHTAQQPQVLDI.

Belongs to the universal ribosomal protein uL13 family. As to quaternary structure, part of the 50S ribosomal subunit.

Its function is as follows. This protein is one of the early assembly proteins of the 50S ribosomal subunit, although it is not seen to bind rRNA by itself. It is important during the early stages of 50S assembly. The chain is Large ribosomal subunit protein uL13 from Actinobacillus succinogenes (strain ATCC 55618 / DSM 22257 / CCUG 43843 / 130Z).